The primary structure comprises 376 residues: MGLLAFLKTQFVLHLLVGFVFVVSGLVINFVQLCTLALWPVSKQLYRRLNCRLAYSLWSQLVMLLEWWSCTECTLFTDQATVERFGKEHAVIILNHNFEIDFLCGWTMCERFGVLGSSKVLAKKELLYVPLIGWTWYFLEIVFCKRKWEEDRDTVVEGLRRLSDYPEYMWFLLYCEGTRFTETKHRVSMEVAAAKGLPVLKYHLLPRTKGFTTAVKCLRGTVAAVYDVTLNFRGNKNPSLLGILYGKKYEADMCVRRFPLEDIPLDEKEAAQWLHKLYQEKDALQEIYNQKGMFPGEQFKPARRPWTLLNFLSWATILLSPLFSFVLGVFASGSPLLILTFLGFVGAASFGVRRLIGVTEIEKGSSYGNQEFKKKE.

Residues 1–124 (MGLLAFLKTQ…LGSSKVLAKK (124 aa)) lie on the Cytoplasmic side of the membrane. Positions 96 to 101 (HNFEID) match the HXXXXD motif motif. The chain crosses the membrane as a helical span at residues 125–145 (ELLYVPLIGWTWYFLEIVFCK). At 146-316 (RKWEEDRDTV…TLLNFLSWAT (171 aa)) the chain is on the lumenal side. Residues 317–339 (ILLSPLFSFVLGVFASGSPLLIL) form a helical membrane-spanning segment. At 340–376 (TFLGFVGAASFGVRRLIGVTEIEKGSSYGNQEFKKKE) the chain is on the cytoplasmic side.

It belongs to the 1-acyl-sn-glycerol-3-phosphate acyltransferase family. As to expression, widely expressed with highest levels in testis, pancreas and kidney, followed by spleen, lung, adipose tissue and liver.

It localises to the endoplasmic reticulum membrane. Its subcellular location is the nucleus envelope. The enzyme catalyses a 1-acyl-sn-glycero-3-phosphate + an acyl-CoA = a 1,2-diacyl-sn-glycero-3-phosphate + CoA. The catalysed reaction is pentadecanoyl-CoA + 1-(9Z-octadecenoyl)-sn-glycero-3-phosphate = 1-(9Z)-octadecenoyl-2-pentadecanoyl-sn-glycero-3-phosphate + CoA. It catalyses the reaction heptadecanoyl-CoA + 1-(9Z-octadecenoyl)-sn-glycero-3-phosphate = 1-(9Z)-octadecenoyl-2-heptadecanoyl-sn-glycero-3-phosphate + CoA. It carries out the reaction 1-(9Z-octadecenoyl)-sn-glycero-3-phosphate + octadecanoyl-CoA = 1-(9Z-octadecenoyl)-2-octadecanoyl-sn-glycero-3-phosphate + CoA. The enzyme catalyses nonadecanoyl-CoA + 1-(9Z-octadecenoyl)-sn-glycero-3-phosphate = 1-(9Z)-octadecenoyl-2-nonadecanoyl-sn-glycero-3-phosphate + CoA. The catalysed reaction is 1-(9Z-octadecenoyl)-sn-glycero-3-phosphate + (5Z,8Z,11Z,14Z)-eicosatetraenoyl-CoA = 1-(9Z)-octadecenoyl-2-(5Z,8Z,11Z,14Z)-eicosatetraenoyl-sn-glycero-3-phosphate + CoA. It catalyses the reaction 1-(9Z-octadecenoyl)-sn-glycero-3-phosphate + (9Z)-octadecenoyl-CoA = 1,2-di-(9Z-octadecenoyl)-sn-glycero-3-phosphate + CoA. It carries out the reaction 1-(9Z-octadecenoyl)-sn-glycero-3-phosphate + (9Z,12Z)-octadecadienoyl-CoA = 1-(9Z)-octadecenoyl-2-(9Z,12Z)-octadecadienoyl-sn-glycero-3-phosphate + CoA. The enzyme catalyses 1-(9Z-octadecenoyl)-sn-glycero-3-phosphocholine + (5Z,8Z,11Z,14Z)-eicosatetraenoyl-CoA = 1-(9Z)-octadecenoyl-2-(5Z,8Z,11Z,14Z)-icosatetraenoyl-sn-glycero-3-phosphocholine + CoA. The catalysed reaction is 1-(9Z-octadecenoyl)-sn-glycero-3-phospho-(1D-myo-inositol) + (5Z,8Z,11Z,14Z)-eicosatetraenoyl-CoA = 1-(9Z-octadecenoyl)-2-(5Z,8Z,11Z,14Z-eicosatetraenoyl)-sn-glycero-3-phospho-1D-myo-inositol + CoA. It catalyses the reaction 1-(9Z-octadecenoyl)-sn-glycero-3-phospho-L-serine + (5Z,8Z,11Z,14Z)-eicosatetraenoyl-CoA = 1-(9Z-octadecenoyl)-2-(5Z,8Z,11Z,14Z-eicosatetraenoyl)-sn-glycero-3-phospho-L-serine + CoA. It carries out the reaction 1-hexadecanoyl-sn-glycero-3-phosphate + (9Z)-octadecenoyl-CoA = 1-hexadecanoyl-2-(9Z-octadecenoyl)-sn-glycero-3-phosphate + CoA. The enzyme catalyses 1-hexadecanoyl-sn-glycero-3-phosphate + (5Z,8Z,11Z,14Z)-eicosatetraenoyl-CoA = 1-hexadecanoyl-2-(5Z,8Z,11Z,14Z-eicosatetraenoyl)-sn-glycero-3-phosphate + CoA. The catalysed reaction is 1-heptadecanoyl-sn-glycero-3-phosphate + (5Z,8Z,11Z,14Z)-eicosatetraenoyl-CoA = 1-heptadecanoyl-2-(5Z,8Z,11Z,14Z)-eicosatetraenoyl-sn-glycero-3-phosphate + CoA. It catalyses the reaction 1-octadecanoyl-sn-glycero-3-phosphate + (9Z)-octadecenoyl-CoA = 1-octadecanoyl-2-(9Z-octadecenoyl)-sn-glycero-3-phosphate + CoA. It carries out the reaction 1-octadecanoyl-sn-glycero-3-phosphate + (5Z,8Z,11Z,14Z)-eicosatetraenoyl-CoA = 1-octadecanoyl-2-(5Z,8Z,11Z,14Z-eicosatetraenoyl)-sn-glycero-3-phosphate + CoA. The enzyme catalyses 1-(9Z-octadecenoyl)-sn-glycero-3-phosphate + hexadecanoyl-CoA = 1-hexadecanoyl-2-(9Z-octadecenoyl)-sn-glycero-3-phosphate + CoA. The catalysed reaction is 1-O-(9Z-octadecenyl)-sn-glycero-3-phosphate + (5Z,8Z,11Z,14Z)-eicosatetraenoyl-CoA = 1-O-(9Z-octadecenyl)-2-(5Z,8Z,11Z,14Z-eicosatetraenoyl)-sn-glycero-3-phosphate + CoA. It catalyses the reaction a 1-acyl-sn-glycero-3-phospho-(1D-myo-inositol) + (5Z,8Z,11Z,14Z)-eicosatetraenoyl-CoA = a 1-acyl-2-(5Z,8Z,11Z,14Z-eicosatetraenoyl)-sn-glycero-3-phospho-(1D-myo-inositol) + CoA. Its pathway is phospholipid metabolism; CDP-diacylglycerol biosynthesis; CDP-diacylglycerol from sn-glycerol 3-phosphate: step 2/3. In terms of biological role, converts 1-acyl-sn-glycerol-3-phosphate (lysophosphatidic acid or LPA) into 1,2-diacyl-sn-glycerol-3-phosphate (phosphatidic acid or PA) by incorporating an acyl moiety at the sn-2 position of the glycerol backbone. Acts on LPA containing saturated or unsaturated fatty acids C16:0-C20:4 at the sn-1 position using C18:1, C20:4 or C18:2-CoA as the acyl donor. Also acts on lysophosphatidylcholine, lysophosphatidylinositol and lysophosphatidylserine using C18:1 or C20:4-CoA. Has a preference for arachidonoyl-CoA as a donor. Also has a modest lysophosphatidylinositol acyltransferase (LPIAT) activity, converts lysophosphatidylinositol (LPI) into phosphatidylinositol. The protein is 1-acyl-sn-glycerol-3-phosphate acyltransferase gamma (AGPAT3) of Homo sapiens (Human).